Reading from the N-terminus, the 341-residue chain is L-threonine 3-dehydrogenase (341 aa).

Cysteine 38 is a Zn(2+) binding site. Active-site charge relay system residues include threonine 40 and histidine 43. Zn(2+)-binding residues include histidine 63, glutamate 64, cysteine 93, cysteine 96, cysteine 99, and cysteine 107. NAD(+) contacts are provided by residues isoleucine 175, aspartate 195, arginine 200, 262–264, and 286–287; these read LGI and IY.

This sequence belongs to the zinc-containing alcohol dehydrogenase family. In terms of assembly, homotetramer. The cofactor is Zn(2+).

Its subcellular location is the cytoplasm. It carries out the reaction L-threonine + NAD(+) = (2S)-2-amino-3-oxobutanoate + NADH + H(+). Its pathway is amino-acid degradation; L-threonine degradation via oxydo-reductase pathway; glycine from L-threonine: step 1/2. Functionally, catalyzes the NAD(+)-dependent oxidation of L-threonine to 2-amino-3-ketobutyrate. In Shewanella halifaxensis (strain HAW-EB4), this protein is L-threonine 3-dehydrogenase.